Reading from the N-terminus, the 129-residue chain is Protein Turandot A1 (129 aa).

A signal peptide spans 1–21 (MNSSTALMCFALLLISPLCMG). Residue Asn49 is glycosylated (N-linked (GlcNAc...) asparagine).

It belongs to the Turandot family.

It is found in the secreted. Functionally, a humoral factor that plays a role in stress tolerance; gives increased resistance to the lethal effects of bacterial challenge and stress. Regulated by the JAK/STAT pathway and NF-KB-like Relish pathway in the fat body, upd3 in the hemocytes and Mekk1 in response to septic injury and consequent immune response. The sequence is that of Protein Turandot A1 (TotA1) from Drosophila simulans (Fruit fly).